A 262-amino-acid chain; its full sequence is uncharacterized protein (262 aa).

2 disordered regions span residues 1 to 30 (MGKK…KKEK) and 232 to 262 (EEEE…DMEE). Acidic residues-rich tracts occupy residues 9–21 (NEDG…ETES), 232–245 (EEEE…EETD), and 253–262 (EEDEDEDMEE).

This is an uncharacterized protein from Caenorhabditis elegans.